We begin with the raw amino-acid sequence, 274 residues long: Cytochrome b-c1 complex subunit Rieske, mitochondrial (274 aa).

Over 79–103 (SHTDVRVPDFSEYRRLEVLDSTKSS) the chain is Mitochondrial matrix. The helical transmembrane segment at 104-140 (RESSEARKGFSYLVTGVTTVGVAYAAKNVVTQFVSSM) threads the bilayer. Residues 141–274 (SASADVLALA…FTSDDMVIVG (134 aa)) are Mitochondrial intermembrane-facing. The Rieske domain occupies 187–272 (EAAVELSQLR…YEFTSDDMVI (86 aa)). The [2Fe-2S] cluster site is built by Cys217, His219, Cys236, His239, and Ser241. A disulfide bridge connects residues Cys222 and Cys238.

The protein belongs to the Rieske iron-sulfur protein family. As to quaternary structure, component of the ubiquinol-cytochrome c oxidoreductase (cytochrome b-c1 complex, complex III, CIII), a multisubunit enzyme composed of 11 subunits. The complex is composed of 3 respiratory subunits cytochrome b, cytochrome c1 and Rieske protein UQCRFS1, 2 core protein subunits UQCRC1/QCR1 and UQCRC2/QCR2, and 6 low-molecular weight protein subunits UQCRH/QCR6, UQCRB/QCR7, UQCRQ/QCR8, UQCR10/QCR9, UQCR11/QCR10 and subunit 9, the cleavage product of Rieske protein UQCRFS1. The complex exists as an obligatory dimer and forms supercomplexes (SCs) in the inner mitochondrial membrane with NADH-ubiquinone oxidoreductase (complex I, CI) and cytochrome c oxidase (complex IV, CIV), resulting in different assemblies (supercomplex SCI(1)III(2)IV(1) and megacomplex MCI(2)III(2)IV(2)). Incorporation of the Rieske protein UQCRFS1 is the penultimate step in complex III assembly. Interacts with TTC19, which is involved in the clearance of UQCRFS1 fragments. In terms of assembly, component of the ubiquinol-cytochrome c oxidoreductase (cytochrome b-c1 complex, complex III, CIII). Subunit 9 corresponds to the mitochondrial targeting sequence (MTS) of Rieske protein UQCRFS1. It is retained after processing and incorporated inside complex III, where it remains bound to the complex and localizes between the 2 core subunits UQCRC1/QCR1 and UQCRC2/QCR2. [2Fe-2S] cluster is required as a cofactor. In terms of processing, proteolytic processing is necessary for the correct insertion of UQCRFS1 in the complex III dimer. Several fragments are generated during UQCRFS1 insertion, most probably due to the endogenous matrix-processing peptidase (MPP) activity of the 2 core protein subunits UQCRC1/QCR1 and UQCRC2/QCR2, which are homologous to the 2 mitochondrial-processing peptidase (MPP) subunits beta-MPP and alpha-MPP respectively. The action of the protease is also necessary for the clearance of the UQCRFS1 fragments.

The protein resides in the mitochondrion inner membrane. The catalysed reaction is a quinol + 2 Fe(III)-[cytochrome c](out) = a quinone + 2 Fe(II)-[cytochrome c](out) + 2 H(+)(out). Component of the ubiquinol-cytochrome c oxidoreductase, a multisubunit transmembrane complex that is part of the mitochondrial electron transport chain which drives oxidative phosphorylation. The respiratory chain contains 3 multisubunit complexes succinate dehydrogenase (complex II, CII), ubiquinol-cytochrome c oxidoreductase (cytochrome b-c1 complex, complex III, CIII) and cytochrome c oxidase (complex IV, CIV), that cooperate to transfer electrons derived from NADH and succinate to molecular oxygen, creating an electrochemical gradient over the inner membrane that drives transmembrane transport and the ATP synthase. The cytochrome b-c1 complex catalyzes electron transfer from ubiquinol to cytochrome c, linking this redox reaction to translocation of protons across the mitochondrial inner membrane, with protons being carried across the membrane as hydrogens on the quinol. In the process called Q cycle, 2 protons are consumed from the matrix, 4 protons are released into the intermembrane space and 2 electrons are passed to cytochrome c. The Rieske protein is a catalytic core subunit containing a [2Fe-2S] iron-sulfur cluster. It cycles between 2 conformational states during catalysis to transfer electrons from the quinol bound in the Q(0) site in cytochrome b to cytochrome c1. Incorporation of UQCRFS1 is the penultimate step in complex III assembly. Its function is as follows. Component of the ubiquinol-cytochrome c oxidoreductase (cytochrome b-c1 complex, complex III, CIII). UQCRFS1 undergoes proteolytic processing once it is incorporated in the complex III dimer. One of the fragments, called subunit 9, corresponds to its mitochondrial targeting sequence (MTS). The proteolytic processing is necessary for the correct insertion of UQCRFS1 in the complex III dimer, but the persistence of UQCRFS1-derived fragments may prevent newly imported UQCRFS1 to be processed and assembled into complex III and is detrimental for the complex III structure and function. The protein is Cytochrome b-c1 complex subunit Rieske, mitochondrial (UQCRFS1) of Pongo pygmaeus (Bornean orangutan).